A 358-amino-acid polypeptide reads, in one-letter code: Peptide chain release factor 1 (358 aa).

An N5-methylglutamine modification is found at Q233.

It belongs to the prokaryotic/mitochondrial release factor family. Post-translationally, methylated by PrmC. Methylation increases the termination efficiency of RF1.

The protein resides in the cytoplasm. Its function is as follows. Peptide chain release factor 1 directs the termination of translation in response to the peptide chain termination codons UAG and UAA. The polypeptide is Peptide chain release factor 1 (Listeria innocua serovar 6a (strain ATCC BAA-680 / CLIP 11262)).